The primary structure comprises 418 residues: Tyrosine--tRNA ligase (418 aa).

Residue Y34 participates in L-tyrosine binding. The 'HIGH' region motif lies at 39-48 (PTADSLHLGH). L-tyrosine contacts are provided by Y169 and Q173. The short motif at 229 to 233 (KFGKS) is the 'KMSKS' region element. K232 lines the ATP pocket. Positions 352 to 418 (LNLVDMLVTA…GKKKYAVLTY (67 aa)) constitute an S4 RNA-binding domain.

This sequence belongs to the class-I aminoacyl-tRNA synthetase family. TyrS type 1 subfamily. As to quaternary structure, homodimer.

The protein resides in the cytoplasm. The catalysed reaction is tRNA(Tyr) + L-tyrosine + ATP = L-tyrosyl-tRNA(Tyr) + AMP + diphosphate + H(+). In terms of biological role, catalyzes the attachment of tyrosine to tRNA(Tyr) in a two-step reaction: tyrosine is first activated by ATP to form Tyr-AMP and then transferred to the acceptor end of tRNA(Tyr). This chain is Tyrosine--tRNA ligase, found in Streptococcus pyogenes serotype M18 (strain MGAS8232).